The following is a 378-amino-acid chain: 1-acyl-sn-glycerol-3-phosphate acyltransferase delta (378 aa).

A helical membrane pass occupies residues 11–31 (FLCHLVFCYVFIASGLIVNAI). Positions 96 to 101 (HKFEID) match the HXXXXD motif motif. The next 3 membrane-spanning stretches (helical) occupy residues 125 to 145 (ELAYVPIIGWMWYFVEMIFCT), 311 to 331 (WLFWASLLLYPFFQFLVSMVS), and 338 to 358 (LASLVLIFCMASMGVRWMIGV).

It belongs to the 1-acyl-sn-glycerol-3-phosphate acyltransferase family. As to expression, expressed at a high levels in the brain, at intermediate or low levels in skeletal muscles, gut, kidney, spleen and lung. Barely detectable in heart and liver.

It is found in the endoplasmic reticulum membrane. The enzyme catalyses a 1-acyl-sn-glycero-3-phosphate + an acyl-CoA = a 1,2-diacyl-sn-glycero-3-phosphate + CoA. The catalysed reaction is (4Z,7Z,10Z,13Z,16Z,19Z)-docosahexaenoyl-CoA + 1-hexadecanoyl-sn-glycero-3-phosphate = 1-hexadecanoyl-2-(4Z,7Z,10Z,13Z,16Z,19Z-docosahexaenoyl)-sn-glycero-3-phosphate + CoA. It carries out the reaction 1-octadecanoyl-sn-glycero-3-phosphate + (9Z,12Z)-octadecadienoyl-CoA = 1-octadecanoyl-2-(9Z,12Z-octadecadienoyl)-sn-glycero-3-phosphate + CoA. It catalyses the reaction 1-octadecanoyl-sn-glycero-3-phosphate + (4Z,7Z,10Z,13Z,16Z,19Z)-docosahexaenoyl-CoA = 1-octadecanoyl-2-(4Z,7Z,10Z,13Z,16Z,19Z-docosahexaenoyl)-sn-glycero-3-phosphate + CoA. The enzyme catalyses (4Z,7Z,10Z,13Z,16Z,19Z)-docosahexaenoyl-CoA + 1-(9Z-octadecenoyl)-sn-glycero-3-phosphate = 1-(9Z-octadecenoyl)-2-(4Z,7Z,10Z,13Z,16Z,19Z-docosahexaenoyl)-sn-glycero-3-phosphate + CoA. Its pathway is phospholipid metabolism; CDP-diacylglycerol biosynthesis; CDP-diacylglycerol from sn-glycerol 3-phosphate: step 2/3. Functionally, converts 1-acyl-sn-glycerol-3-phosphate (lysophosphatidic acid or LPA) into 1,2-diacyl-sn-glycerol-3-phosphate (phosphatidic acid or PA) by incorporating an acyl moiety at the sn-2 position of the glycerol backbone. Exhibits high acyl-CoA specificity for polyunsaturated fatty acyl-CoA, especially docosahexaenoyl-CoA (22:6-CoA, DHA-CoA). The chain is 1-acyl-sn-glycerol-3-phosphate acyltransferase delta (Agpat4) from Mus musculus (Mouse).